A 709-amino-acid chain; its full sequence is Polyribonucleotide nucleotidyltransferase (709 aa).

Mg(2+) is bound by residues aspartate 486 and aspartate 492. Residues proline 553–isoleucine 612 enclose the KH domain. The S1 motif domain occupies glycine 622–lysine 690.

It belongs to the polyribonucleotide nucleotidyltransferase family. As to quaternary structure, component of the RNA degradosome, which is a multiprotein complex involved in RNA processing and mRNA degradation. Mg(2+) is required as a cofactor.

It is found in the cytoplasm. It carries out the reaction RNA(n+1) + phosphate = RNA(n) + a ribonucleoside 5'-diphosphate. Functionally, involved in mRNA degradation. Catalyzes the phosphorolysis of single-stranded polyribonucleotides processively in the 3'- to 5'-direction. This is Polyribonucleotide nucleotidyltransferase from Photorhabdus luminescens (Xenorhabdus luminescens).